Reading from the N-terminus, the 149-residue chain is MDISRWLERHVGVQLLRLHDAIYRGTNGRIGHRIPGAPPSLLLHTTGAKTSQPRTTSLTYARDGDAYLIVASKGGDPRSPGWYHNLKANPDVEINVGPKRFGVTAKPVQPHDPDYARLWQIVNENNANRYTNYQSRTSRPIPVVVLTRR.

Residues 48–50 (AKT), 54–59 (RTTSLT), 70–73 (VASK), 81–85 (GWYHN), and Y130 each bind coenzyme F420-(gamma-Glu)n.

The protein belongs to the F420H(2)-dependent quinone reductase family.

Its subcellular location is the cell membrane. It catalyses the reaction oxidized coenzyme F420-(gamma-L-Glu)(n) + a quinol + H(+) = reduced coenzyme F420-(gamma-L-Glu)(n) + a quinone. In terms of biological role, involved in a F420-dependent anti-oxidant mechanism that protects M.tuberculosis against oxidative stress and bactericidal agents. Catalyzes the F420H(2)-dependent two-electron reduction of quinones to dihydroquinones, thereby preventing the formation of cytotoxic semiquinones obtained by the one-electron reduction pathway. In vitro, catalyzes the reduction of menadione to menadiol; since menaquinone is the sole quinone electron carrier in the respiratory chain in M.tuberculosis, the physiological electron acceptor for Fqr-mediated F420H(2) oxidation is therefore likely to be the endogenous menaquinone found in the membrane fraction of M.tuberculosis. The polypeptide is F420H(2)-dependent quinone reductase MT1299 (Mycobacterium tuberculosis (strain CDC 1551 / Oshkosh)).